The chain runs to 846 residues: MSSSHTPMMQQYLRIKTDYPDMLLFYRMGDFYELFFDDAKRASQLLDLTLTHRGQSADKPIPMAGVPYHAVENYLARLLKKGESVAICEQIGDPATSKGPVERQVTRIITPGTVTDEALLDARKDNILLAIHTQKQKIGIAWVDLGGGRFHLQELTEEHQLNAELVRLQPAELLCKESTPLPSFCSNFAVKFRPGWEFDASNAHKLLCEQFSVTDLSAFGEQNYPTALIAAGALLAYLKTTQKQSLPHLTTLTLEQSEDYLQLDASTQKHLELFENIHGGGEHCLLSILDKTACAMGSRLLKRWLGKPLKQHAIIQTRQQAIKEIIFLQQDVSLHQLIKQCADVERIVSRIALKSARPRDLVSLLQTLTLLPAIHDELQENKSLLINEIKKEISPLPLLQQLLETAIIDNPPMLIRDGGVIAPGFDEELDELRNLSSNAHETLVKLEQEEKNRTGLSTLKLGYNSVQGFYIELSKAQAQNAPPHFHRKQTLKNVERYITPELKLFEDKVLSAQSKALAREKWLYDNLLEEIQQYIPELSDLAKSLAQLDVLVTLAERAQSLNWNCPNLVPESGIMIQAGRHPVIEPLLQERFIANDLELKPNQNMLLITGPNMGGKSTYMRQTALIVLLSHIGSFVPADEVTLGPLDRIFTRIGASDDLSSGRSTFMVEMTETAQILRQATSQSLVLIDEIGRGTSTYDGMALAYASCAFLASTIKAYTLFSTHYLELTELPKEFSCIRNVHLQASIKTGQIVFLYRVEEGCANRSYGLEVAELAGIPKEVLKLAHEHLNQIQDTQSILVQTQIIKPPTSPVLTELKKIDPDRLTAKEALDLIYKLKHLECAESIN.

Residue 610–617 (GPNMGGKS) coordinates ATP.

Belongs to the DNA mismatch repair MutS family.

In terms of biological role, this protein is involved in the repair of mismatches in DNA. It is possible that it carries out the mismatch recognition step. This protein has a weak ATPase activity. The sequence is that of DNA mismatch repair protein MutS from Legionella pneumophila (strain Paris).